The following is a 468-amino-acid chain: Hydroxymethylglutaryl-CoA lyase, mitochondrial (468 aa).

The Pyruvate carboxyltransferase domain occupies 168–435 (VKIVEVGPRD…HTNVDLGKLI (268 aa)). Arg-176 contacts substrate. A divalent metal cation is bound by residues Asp-177, His-368, and His-370. Cys-401 is an active-site residue. Asn-410 contacts a divalent metal cation.

The protein belongs to the HMG-CoA lyase family. As to quaternary structure, homodimer. A divalent metal cation serves as cofactor.

The protein localises to the mitochondrion matrix. The enzyme catalyses (3S)-3-hydroxy-3-methylglutaryl-CoA = acetoacetate + acetyl-CoA. It functions in the pathway metabolic intermediate metabolism; (S)-3-hydroxy-3-methylglutaryl-CoA degradation; acetoacetate from (S)-3-hydroxy-3-methylglutaryl-CoA: step 1/1. Involved in the catabolism of branched amino acids such as leucine. The protein is Hydroxymethylglutaryl-CoA lyase, mitochondrial (HMGCL) of Arabidopsis thaliana (Mouse-ear cress).